Here is a 618-residue protein sequence, read N- to C-terminus: Manganese lipoxygenase (618 aa).

A signal peptide spans 1–16 (MRSRILAIVFAARHVA). A compositionally biased stretch (low complexity) spans 36 to 45 (SSTTVLPSPT). The interval 36–58 (SSTTVLPSPTQYTLPNNDPNQGA) is disordered. Residues 46-58 (QYTLPNNDPNQGA) show a composition bias toward polar residues. The 571-residue stretch at 47 to 617 (YTLPNNDPNQ…NPAVNPFFLS (571 aa)) folds into the Lipoxygenase domain. 5 N-linked (GlcNAc...) asparagine glycosylation sites follow: N60, N91, N106, N116, and N157. Mn(2+) contacts are provided by H290, H294, H478, and N482. An N-linked (GlcNAc...) asparagine glycan is attached at N513. V618 lines the Mn(2+) pocket.

This sequence belongs to the lipoxygenase family. It depends on Mn(2+) as a cofactor. In terms of processing, N- and O-glycosylated.

The protein localises to the secreted. It carries out the reaction (9Z,12Z)-octadecadienoate + O2 = (11S)-hydroperoxy-(9Z,12Z)-octadecadienoate. It catalyses the reaction (9Z,12Z)-octadecadienoate + O2 = (13R)-hydroperoxy-(9Z,11E)-octadecadienoate. The enzyme catalyses (9Z,12Z,15Z)-octadecatrienoate + O2 = (11S)-hydroperoxy-(9Z,12Z,15Z)-octadecatrienoate. The catalysed reaction is (9Z,12Z,15Z)-octadecatrienoate + O2 = (13R)-hydroperoxy-(9Z,11E,15Z)-octadecatrienoate. In terms of biological role, lipoxygenase that metabolizes linoleic and alpha-linolenic acids to 11S- and 13R-hydroperoxy fatty acids. At the end of lipoxygenation, the intermediate product 11S-HPODE from linoleic acid is then transformed into 13R-HPODE as the final product. It also acts on alpha-linolenic acid producing 11S-HPOTrE and 13R-HPOTrE with subsequent transformation of 11S-HPOTrE to 13R-HPOTrE as the final product. Gamma-linolenic acid is a poor substrate. Oleate and arachidonate are not substrates. This is Manganese lipoxygenase from Gaeumannomyces tritici (Wheat and barley take-all root rot fungus).